The primary structure comprises 554 residues: Terpene synthase 17 (554 aa).

Mg(2+) contacts are provided by D306, D310, and E458. Positions 306-310 match the DDXXD motif motif; the sequence is DDTYD.

It belongs to the terpene synthase family. Tpsa subfamily. Requires Mg(2+) as cofactor. Mn(2+) is required as a cofactor. As to expression, mostly expressed in stem and trichomes, to a lower extent in leaves, flowers and roots and, at low levels, in fruits.

The catalysed reaction is (2Z,6Z)-farnesyl diphosphate = beta-bisabolene + diphosphate. The enzyme catalyses (2E,6E)-farnesyl diphosphate = (+)-valencene + diphosphate. It carries out the reaction (2E,6E)-farnesyl diphosphate = (E)-beta-farnesene + diphosphate. It catalyses the reaction (2E,6E)-farnesyl diphosphate = gamma-gurjunene + diphosphate. The catalysed reaction is (2Z,6Z)-farnesyl diphosphate = (E)-gamma-bisabolene + diphosphate. The enzyme catalyses (2E)-geranyl diphosphate = limonene + diphosphate. It carries out the reaction (2E)-geranyl diphosphate = beta-myrcene + diphosphate. It catalyses the reaction (2E)-geranyl diphosphate = (E)-beta-ocimene + diphosphate. The catalysed reaction is (2E)-geranyl diphosphate = terpinolene + diphosphate. The enzyme catalyses (2E)-geranyl diphosphate = gamma-terpinene + diphosphate. It carries out the reaction (2Z,6Z)-farnesyl diphosphate = (Z)-gamma-bisabolene + diphosphate. It catalyses the reaction (2E,6E)-farnesyl diphosphate = (1S,5S,6R)-alpha-bergamotene + diphosphate. The catalysed reaction is (2Z,6Z)-farnesyl diphosphate = (1S,5S,6S)-alpha-bergamotene + diphosphate. It functions in the pathway secondary metabolite biosynthesis; terpenoid biosynthesis. Its function is as follows. Sesquiterpene synthase involved in the biosynthesis of volatile compounds. Mediates the conversion of (2E,6E)-farnesyl diphosphate (FPP) into gamma-gurjunene, (E)-beta-farnesene and (+)-valencene, and of (2Z,6Z)-farnesyl diphosphate ((ZZ)-FPP) into (E)-alpha-bergamotene and (Z)-gamma-bisabolene as well as beta-bisabolene, (Z)-alpha-bergamotene and (E)-gamma-bisabolene to a lower extent. Can act with a low efficiency as a monoterpene synthase with geranyl diphosphate (GPP) as substrate, thus producing beta-myrcene, (E)-beta-ocimene, limonene, terpinolene, gamma-terpinene and (Z)-beta-ocimene. This is Terpene synthase 17 from Solanum lycopersicum (Tomato).